The following is a 219-amino-acid chain: MRSTYLREYKLVVVGDGGVGKSALTIQLIQSHFVDEYDPTIEDSYRKKCEIDGEGALLDVLDTAGQEEYSAMREQYMRTGEGFLLVYNITSRSSFDEISTFYQQILRVKDKDTFPVVLVANKCDLEAERVVSRAEGEQLAKSMHCLYVETSAKLRLNVEEAFYSLVRTIRRYNKSEEKGFQNKQAVQTAQVPASTAKRASAVNNSKTEDEVSTKCCVIC.

GTP is bound at residue 15-22 (GDGGVGKS). The Effector region motif lies at 37–45 (YDPTIEDSY). GTP contacts are provided by residues 62 to 66 (DTAGQ) and 121 to 124 (NKCD). Cysteine 216 carries the post-translational modification Cysteine methyl ester. A lipid anchor (S-farnesyl cysteine) is attached at cysteine 216. Residues 217–219 (VIC) constitute a propeptide, removed in mature form.

This sequence belongs to the small GTPase superfamily. Ras family. Scd1, scd2, cdc42, and ras1, in its GTP-bound state, act cooperatively to form a protein complex. In terms of processing, palmitoylated by the erf2-erf4 complex.

It localises to the cell membrane. The enzyme catalyses GTP + H2O = GDP + phosphate + H(+). Alternates between an inactive form bound to GDP and an active form bound to GTP. Activated by a guanine nucleotide-exchange factor (GEF) and inactivated by a GTPase-activating protein (GAP). Functionally, participates in the process of sexual differentiation and the determination of cell shape. Essential for mating and for recognition of the mating pheromone, but not for vegetative growth. Does not regulate the intracellular cAMP level. Regulates two downstream pathways, namely the byr2/byr1/spk1 mitogen-activated protein kinase cascade and the cdc42 small G protein pathway. The former is relevant to mating and sporulation, whereas the latter is relevant to mating, cell growth and cell morphology. This chain is Ras-like protein 1 (ras1), found in Schizosaccharomyces pombe (strain 972 / ATCC 24843) (Fission yeast).